A 326-amino-acid polypeptide reads, in one-letter code: Transcription initiation factor IIB (326 aa).

The segment at 26–57 (DVEVCPECGSPRLIRDYRRGEFICQDCGLVIE) adopts a TFIIB-type zinc-finger fold. Residues Cys-30, Cys-33, Cys-49, and Cys-52 each coordinate Zn(2+). 2 tandem repeats follow at residues 143-226 (SELD…TREL) and 237-318 (DYIP…ELAE).

This sequence belongs to the TFIIB family.

In terms of biological role, stabilizes TBP binding to an archaeal box-A promoter. Also responsible for recruiting RNA polymerase II to the pre-initiation complex (DNA-TBP-TFIIB). The polypeptide is Transcription initiation factor IIB (Archaeoglobus fulgidus (strain ATCC 49558 / DSM 4304 / JCM 9628 / NBRC 100126 / VC-16)).